A 244-amino-acid polypeptide reads, in one-letter code: Ubiquinone/menaquinone biosynthesis C-methyltransferase UbiE (244 aa).

S-adenosyl-L-methionine contacts are provided by residues threonine 70, aspartate 91, and 117-118; that span reads DA.

Belongs to the class I-like SAM-binding methyltransferase superfamily. MenG/UbiE family.

The catalysed reaction is a 2-demethylmenaquinol + S-adenosyl-L-methionine = a menaquinol + S-adenosyl-L-homocysteine + H(+). The enzyme catalyses a 2-methoxy-6-(all-trans-polyprenyl)benzene-1,4-diol + S-adenosyl-L-methionine = a 5-methoxy-2-methyl-3-(all-trans-polyprenyl)benzene-1,4-diol + S-adenosyl-L-homocysteine + H(+). It functions in the pathway quinol/quinone metabolism; menaquinone biosynthesis; menaquinol from 1,4-dihydroxy-2-naphthoate: step 2/2. Its pathway is cofactor biosynthesis; ubiquinone biosynthesis. Methyltransferase required for the conversion of demethylmenaquinol (DMKH2) to menaquinol (MKH2) and the conversion of 2-polyprenyl-6-methoxy-1,4-benzoquinol (DDMQH2) to 2-polyprenyl-3-methyl-6-methoxy-1,4-benzoquinol (DMQH2). The sequence is that of Ubiquinone/menaquinone biosynthesis C-methyltransferase UbiE from Nitrosospira multiformis (strain ATCC 25196 / NCIMB 11849 / C 71).